The chain runs to 562 residues: Endoglucanase E1 (562 aa).

The first 41 residues, 1–41, serve as a signal peptide directing secretion; sequence MPRALRRVPGSRVMLRVGVVVAVLALVAALANLAVPRPARA. The interval 42 to 400 is catalytic; sequence AGGGYWHTSG…IKSSIFDPVG (359 aa). Cys-75 and Cys-161 are oxidised to a cystine. The Proton donor role is filled by Glu-203. A disulfide bridge links Cys-209 with Cys-212. Glu-323 serves as the catalytic Nucleophile. Positions 399-462 are disordered; sequence VGASASPSSQ…PTPSPTAASG (64 aa). 2 stretches are compositionally biased toward low complexity: residues 401 to 411 and 437 to 449; these read ASASPSSQPSP and PTPT…TPTP. Residues 458-562 enclose the CBM2 domain; sequence TAASGARCTA…AAPTVACAAS (105 aa).

Belongs to the glycosyl hydrolase 5 (cellulase A) family.

The catalysed reaction is Endohydrolysis of (1-&gt;4)-beta-D-glucosidic linkages in cellulose, lichenin and cereal beta-D-glucans.. Has a very high specific activity on carboxymethylcellulose. In Acidothermus cellulolyticus (strain ATCC 43068 / DSM 8971 / 11B), this protein is Endoglucanase E1.